Consider the following 548-residue polypeptide: Probable nuclear hormone receptor HR3 (548 aa).

Positions 1-27 (MNNNQFHELFGSQWPPDQHGGHSSAST) are disordered. The segment at residues 101-176 (IIPCKVCGDK…LGMSRDAVKF (76 aa)) is a DNA-binding region (nuclear receptor). 2 NR C4-type zinc fingers span residues 104 to 124 (CKVC…CEGC) and 140 to 164 (CPRN…LQKC). Positions 198–228 (MRAQNDAAPDSVYDAQQQTPSSSDQFHGHYN) are disordered. Residues 211–222 (DAQQQTPSSSDQ) are compositionally biased toward polar residues. An NR LBD domain is found at 295–539 (ISKVLVKSLA…PALYKELFSL (245 aa)).

Belongs to the nuclear hormone receptor family. NR1 subfamily.

It localises to the nucleus. In terms of biological role, putative receptor whose ligand is not yet known. This is Probable nuclear hormone receptor HR3 (HR3) from Manduca sexta (Tobacco hawkmoth).